Consider the following 313-residue polypeptide: Holliday junction branch migration complex subunit RuvB (313 aa).

Residues 1-157 are large ATPase domain (RuvB-L); the sequence is MNEYIGQGNI…FGLIMELDFY (157 aa). Residues Gly38, Lys41, Thr42, Thr43, 104–106, Arg147, Tyr157, and Arg194 each bind ATP; that span reads EDF. Thr42 is a Mg(2+) binding site. Residues 158-228 are small ATPAse domain (RuvB-S); the sequence is SIDELSKIIE…MVEEIMFLLG (71 aa). The tract at residues 231-313 is head domain (RuvB-H); it reads KEGLDELDRK…KVQRGLFDEE (83 aa). DNA contacts are provided by Arg286 and Arg291.

It belongs to the RuvB family. As to quaternary structure, homohexamer. Forms an RuvA(8)-RuvB(12)-Holliday junction (HJ) complex. HJ DNA is sandwiched between 2 RuvA tetramers; dsDNA enters through RuvA and exits via RuvB. An RuvB hexamer assembles on each DNA strand where it exits the tetramer. Each RuvB hexamer is contacted by two RuvA subunits (via domain III) on 2 adjacent RuvB subunits; this complex drives branch migration. In the full resolvosome a probable DNA-RuvA(4)-RuvB(12)-RuvC(2) complex forms which resolves the HJ.

The protein localises to the cytoplasm. It catalyses the reaction ATP + H2O = ADP + phosphate + H(+). Functionally, the RuvA-RuvB-RuvC complex processes Holliday junction (HJ) DNA during genetic recombination and DNA repair, while the RuvA-RuvB complex plays an important role in the rescue of blocked DNA replication forks via replication fork reversal (RFR). RuvA specifically binds to HJ cruciform DNA, conferring on it an open structure. The RuvB hexamer acts as an ATP-dependent pump, pulling dsDNA into and through the RuvAB complex. RuvB forms 2 homohexamers on either side of HJ DNA bound by 1 or 2 RuvA tetramers; 4 subunits per hexamer contact DNA at a time. Coordinated motions by a converter formed by DNA-disengaged RuvB subunits stimulates ATP hydrolysis and nucleotide exchange. Immobilization of the converter enables RuvB to convert the ATP-contained energy into a lever motion, pulling 2 nucleotides of DNA out of the RuvA tetramer per ATP hydrolyzed, thus driving DNA branch migration. The RuvB motors rotate together with the DNA substrate, which together with the progressing nucleotide cycle form the mechanistic basis for DNA recombination by continuous HJ branch migration. Branch migration allows RuvC to scan DNA until it finds its consensus sequence, where it cleaves and resolves cruciform DNA. The sequence is that of Holliday junction branch migration complex subunit RuvB from Thermosipho melanesiensis (strain DSM 12029 / CIP 104789 / BI429).